The primary structure comprises 75 residues: MKLLLFTALVLVVISLVEVEAENERACIPLEKECTKTPGNCCSGLKCDCYRRFEQGVAKGIQCWCIEKDVTYKGV.

The N-terminal stretch at 1–21 (MKLLLFTALVLVVISLVEVEA) is a signal peptide. The propeptide occupies 22 to 25 (ENER).

Belongs to the neurotoxin 19 (CSTX) family. 06 (U6-Lctx) subfamily. Post-translationally, contains 4 disulfide bonds. In terms of tissue distribution, expressed by the venom gland.

It localises to the secreted. The polypeptide is U6-lycotoxin-Ls1d (Lycosa singoriensis (Wolf spider)).